Here is a 261-residue protein sequence, read N- to C-terminus: MSLDAADITVKLGRTPILHGIGFCAKPGEVSAIVGPNGSGKTTLLRAITGDLPFDGTVRLNGKDTSRMKPWELSAIRAVLPQSAVLAFPFTVAEVVRLGVQAGVCARDCDAPMAALSQVRLAHYADRFYHELSGGEQQRVQLARVLAQVWRPVVGGAPRWLLLDEPVASLDIANQLEVMEITRAYASAGGGVVAVMHDLNLTAMFADHLAILSGGQCLAAGPPEQVMTDAILSQAYGCALRVNTPPPHSATYVLPHAANRL.

Residues 3–239 (LDAADITVKL…AILSQAYGCA (237 aa)) enclose the ABC transporter domain. Residue 35–42 (GPNGSGKT) participates in ATP binding.

The protein belongs to the ABC transporter superfamily. Heme (hemin) importer (TC 3.A.1.14.5) family. The complex is composed of two ATP-binding proteins (HmuV), two transmembrane proteins (HmuU) and a solute-binding protein (HmuT).

The protein localises to the cell inner membrane. Part of the ABC transporter complex HmuTUV involved in hemin import. Responsible for energy coupling to the transport system. The chain is Hemin import ATP-binding protein HmuV from Roseobacter denitrificans (strain ATCC 33942 / OCh 114) (Erythrobacter sp. (strain OCh 114)).